A 693-amino-acid chain; its full sequence is TGF-beta-activated kinase 1 and MAP3K7-binding protein 2 (693 aa).

Residues 8-51 (IDFQVLHDLRQKFPEVPEVVVSRCMLQNNNNLDACCAVLSQEST) enclose the CUE domain. A disordered region spans residues 90 to 171 (HGREGSRVNG…KGTSNLSQQT (82 aa)). Polar residues-rich tracts occupy residues 97 to 130 (VNGS…QTAP), 143 to 153 (PSTSGASNSTP), and 162 to 171 (KGTSNLSQQT). Arginine 173 bears the Asymmetric dimethylarginine mark. A compositionally biased stretch (polar residues) spans 223–282 (SGTARQTQQHSGWVSQFNPMNPQQAYQPSQPGPWTTYPASNPLPHTSTQQPNQQGHQTSH). The disordered stretch occupies residues 223–310 (SGTARQTQQH…SGSSQSSAHS (88 aa)). Residues 286–310 (PISSPTTPQPPTIHSSGSSQSSAHS) show a composition bias toward low complexity. A Glycyl lysine isopeptide (Lys-Gly) (interchain with G-Cter in SUMO) cross-link involves residue lysine 329. A disordered region spans residues 330-380 (LEPPQRNSSSKLRSSGPRTASTSSLVNSQTLNRNQPTVYIAASPPNTDEMI). The segment covering 334–366 (QRNSSSKLRSSGPRTASTSSLVNSQTLNRNQPT) has biased composition (polar residues). Residues serine 372, serine 450, serine 482, and serine 524 each carry the phosphoserine modification. Residues 532-619 (YTQALLVHQK…TKEIDLFQAR (88 aa)) are a coiled coil. Residue lysine 562 forms a Glycyl lysine isopeptide (Lys-Gly) (interchain with G-Cter in SUMO) linkage. Serine 582 carries the post-translational modification Phosphoserine. A Glycyl lysine isopeptide (Lys-Gly) (interchain with G-Cter in ubiquitin) cross-link involves residue lysine 611. Positions 640 to 663 (PVPPKPKDQRSTIKAPKTQDAEDE) are disordered. A RanBP2-type zinc finger spans residues 663–693 (EEGAQWNCTACTFLNHPALIRCEQCEMPRHF). An interaction with polyubiquitin region spans residues 675 to 685 (FLNHPALIRCE).

As to quaternary structure, interacts with MAP3K7 and TRAF6. Identified in the TRIKA2 complex composed of MAP3K7, TAB1 and TAB2. Binds 'Lys-63'-linked polyubiquitin chains. Interacts with NCOR1 and HDAC3 to form a ternary complex. Interacts (via C-terminal) with NUMBL (via PTB domain). Interacts (via the C-terminus) with DYNC2I2 (via WD domains). Interacts with RBCK1. Interacts with TRIM5. Interacts with TRIM38 (via B30.2/SPRY domain), leading to its translocation to lysosomes and degradation. Interacts with ASB1; this interaction promotes TAB2 stability. Post-translationally, SUMOylated by TRIM60; leading to inhibition of MAPK/NF-kappaB activation and the innate immune response. Ubiquitinated; following IL1 stimulation or TRAF6 overexpression. Ubiquitination involves RBCK1 leading to proteasomal degradation. Ubiquitinated at Lys-611 by TRIM45 leading to proteasomal degradation. In terms of processing, degraded in a lysosome-dependent manner following interaction with TRIM38. Post-translationally, phosphorylated. As to expression, widely expressed.

It is found in the membrane. It localises to the endosome membrane. The protein localises to the lysosome membrane. Its subcellular location is the cytoplasm. The protein resides in the cytosol. It is found in the nucleus. Its function is as follows. Adapter required to activate the JNK and NF-kappa-B signaling pathways through the specific recognition of 'Lys-63'-linked polyubiquitin chains by its RanBP2-type zinc finger (NZF). Acts as an adapter linking MAP3K7/TAK1 and TRAF6 to 'Lys-63'-linked polyubiquitin chains. The RanBP2-type zinc finger (NZF) specifically recognizes Lys-63'-linked polyubiquitin chains unanchored or anchored to the substrate proteins such as RIPK1/RIP1 and RIPK2: this acts as a scaffold to organize a large signaling complex to promote autophosphorylation of MAP3K7/TAK1, and subsequent activation of I-kappa-B-kinase (IKK) core complex by MAP3K7/TAK1. Also recognizes and binds Lys-63'-linked polyubiquitin chains of heterotypic 'Lys-63'-/'Lys-48'-linked branched ubiquitin chains. Regulates the IL1-mediated translocation of NCOR1 out of the nucleus. Involved in heart development. The protein is TGF-beta-activated kinase 1 and MAP3K7-binding protein 2 (Tab2) of Mus musculus (Mouse).